The chain runs to 311 residues: Malate dehydrogenase (311 aa).

Residues 7–13 (GAAGGIG) and Asp-34 each bind NAD(+). Arg-81 and Arg-87 together coordinate substrate. Residues Asn-94 and 117 to 119 (ITN) contribute to the NAD(+) site. The substrate site is built by Asn-119 and Arg-153. The Proton acceptor role is filled by His-177. Met-227 provides a ligand contact to NAD(+).

Belongs to the LDH/MDH superfamily. MDH type 1 family. In terms of assembly, homodimer.

The catalysed reaction is (S)-malate + NAD(+) = oxaloacetate + NADH + H(+). In terms of biological role, catalyzes the reversible oxidation of malate to oxaloacetate. This chain is Malate dehydrogenase, found in Aliivibrio salmonicida (strain LFI1238) (Vibrio salmonicida (strain LFI1238)).